The following is a 964-amino-acid chain: Glycine dehydrogenase (decarboxylating) (964 aa).

The segment covering 1–11 has biased composition (polar residues); sequence MNSTLQNQTKT. Positions 1-21 are disordered; it reads MNSTLQNQTKTNLEKVGTDPL. The residue at position 713 (K713) is an N6-(pyridoxal phosphate)lysine.

Belongs to the GcvP family. In terms of assembly, the glycine cleavage system is composed of four proteins: P, T, L and H. The cofactor is pyridoxal 5'-phosphate.

It catalyses the reaction N(6)-[(R)-lipoyl]-L-lysyl-[glycine-cleavage complex H protein] + glycine + H(+) = N(6)-[(R)-S(8)-aminomethyldihydrolipoyl]-L-lysyl-[glycine-cleavage complex H protein] + CO2. The glycine cleavage system catalyzes the degradation of glycine. The P protein binds the alpha-amino group of glycine through its pyridoxal phosphate cofactor; CO(2) is released and the remaining methylamine moiety is then transferred to the lipoamide cofactor of the H protein. The sequence is that of Glycine dehydrogenase (decarboxylating) from Leptospira interrogans serogroup Icterohaemorrhagiae serovar Lai (strain 56601).